The primary structure comprises 392 residues: tRNA (guanine-N(7)-)-methyltransferase (392 aa).

Positions 123, 148, and 175 each coordinate S-adenosyl-L-methionine. Substrate is bound by residues K201 and D231.

Belongs to the class I-like SAM-binding methyltransferase superfamily. TrmB family.

The enzyme catalyses guanosine(46) in tRNA + S-adenosyl-L-methionine = N(7)-methylguanosine(46) in tRNA + S-adenosyl-L-homocysteine. It participates in tRNA modification; N(7)-methylguanine-tRNA biosynthesis. Catalyzes the formation of N(7)-methylguanine at position 46 (m7G46) in tRNA. In Campylobacter jejuni (strain RM1221), this protein is tRNA (guanine-N(7)-)-methyltransferase.